The following is a 281-amino-acid chain: Leukocyte antigen CD37 (281 aa).

At Met-1–Val-17 the chain is on the cytoplasmic side. The helical transmembrane segment at Phe-18–Ile-38 threads the bilayer. Residues Asp-39–Lys-59 lie on the Extracellular side of the membrane. The helical transmembrane segment at Val-60–Leu-74 threads the bilayer. Over Gly-75–Cys-85 the chain is Cytoplasmic. Residues Leu-86 to Gln-111 traverse the membrane as a helical segment. Residues Arg-112 to Asn-241 lie on the Extracellular side of the membrane. N-linked (GlcNAc...) asparagine glycans are attached at residues Asn-170, Asn-183, and Asn-188. The helical transmembrane segment at Leu-242–Leu-266 threads the bilayer. The Cytoplasmic segment spans residues Cys-267–Arg-281.

The protein belongs to the tetraspanin (TM4SF) family. As to quaternary structure, interacts with SCIMP. Interacts with SOCS3. Interacts with DECTIN1/CLEC7A. Post-translationally, tyrosine phosphorylated; leading to activation of downstream signaling pathways. As to expression, B-lymphocytes. Antigen presenting cells.

Its subcellular location is the cell membrane. Its function is as follows. Structural component of specialized membrane microdomains known as tetraspanin-enriched microdomains (TERMs), which act as platforms for receptor clustering and signaling. Participates thereby in diverse biological functions such as cell signal transduction, adhesion, migration and protein trafficking. Upon ligand binding, two signaling pathways are activated, one acting through phosphorylation by LYN leading to cell death or a survival pathway with activation of GSK3B. Plays an essential role essential for clustering of integrin ITGA4/ITGB1 and promotes its mobility in the plasma membrane of B-cells. In turn, participates in ITGA4/ITGB1 integrin-mediated antiapoptotic signaling through AKT. Also plays a role in the migration of dendritic cells and neutrophils to draining lymph nodes, as well as in their integrin-mediated adhesion. Negatively regulates IL-6 responses through direct interaction with SOCS3 thereby preventing constitutive IL-6 signaling. Alternatively, inhibition of IL-6 signaling can also occur via interaction and stabilization of DECTIN1/CLEC7A at the cell membrane to inhibit its ability to promote the production of IL-6. The protein is Leukocyte antigen CD37 (CD37) of Homo sapiens (Human).